The chain runs to 367 residues: 3-isopropylmalate dehydrogenase (367 aa).

Position 77–90 (77–90) interacts with NAD(+); the sequence is GPKWDAVPYEVRPE. Positions 97, 107, 135, and 226 each coordinate substrate. Mg(2+) contacts are provided by D226, D250, and D254. 290-302 serves as a coordination point for NAD(+); the sequence is GSAPDIAGKGIAN.

This sequence belongs to the isocitrate and isopropylmalate dehydrogenases family. LeuB type 1 subfamily. Homodimer. Requires Mg(2+) as cofactor. It depends on Mn(2+) as a cofactor.

The protein resides in the cytoplasm. The catalysed reaction is (2R,3S)-3-isopropylmalate + NAD(+) = 4-methyl-2-oxopentanoate + CO2 + NADH. It functions in the pathway amino-acid biosynthesis; L-leucine biosynthesis; L-leucine from 3-methyl-2-oxobutanoate: step 3/4. In terms of biological role, catalyzes the oxidation of 3-carboxy-2-hydroxy-4-methylpentanoate (3-isopropylmalate) to 3-carboxy-4-methyl-2-oxopentanoate. The product decarboxylates to 4-methyl-2 oxopentanoate. The chain is 3-isopropylmalate dehydrogenase from Mesorhizobium japonicum (strain LMG 29417 / CECT 9101 / MAFF 303099) (Mesorhizobium loti (strain MAFF 303099)).